The primary structure comprises 476 residues: RuvB-like helicase 2 (476 aa).

72-80 (VGPPSTGKT) serves as a coordination point for ATP.

Belongs to the RuvB family. May form heterododecamers with RVB1. Component of the SWR1 chromatin remodeling complex, the INO80 chromatin remodeling complex, and of the R2TP complex.

It localises to the nucleus. It carries out the reaction ATP + H2O = ADP + phosphate + H(+). Its function is as follows. DNA helicase which participates in several chromatin remodeling complexes, including the SWR1 and the INO80 complexes. The SWR1 complex mediates the ATP-dependent exchange of histone H2A for the H2A variant HZT1 leading to transcriptional regulation of selected genes by chromatin remodeling. The INO80 complex remodels chromatin by shifting nucleosomes and is involved in DNA repair. Also involved in pre-rRNA processing. In Mycosarcoma maydis (Corn smut fungus), this protein is RuvB-like helicase 2 (RVB2).